A 321-amino-acid polypeptide reads, in one-letter code: Lipoyl synthase (321 aa).

[4Fe-4S] cluster contacts are provided by cysteine 68, cysteine 73, cysteine 79, cysteine 94, cysteine 98, cysteine 101, and serine 308. The Radical SAM core domain occupies 80–297 (FNHGTATFMI…KAYADEIGFT (218 aa)).

This sequence belongs to the radical SAM superfamily. Lipoyl synthase family. It depends on [4Fe-4S] cluster as a cofactor.

The protein localises to the cytoplasm. The catalysed reaction is [[Fe-S] cluster scaffold protein carrying a second [4Fe-4S](2+) cluster] + N(6)-octanoyl-L-lysyl-[protein] + 2 oxidized [2Fe-2S]-[ferredoxin] + 2 S-adenosyl-L-methionine + 4 H(+) = [[Fe-S] cluster scaffold protein] + N(6)-[(R)-dihydrolipoyl]-L-lysyl-[protein] + 4 Fe(3+) + 2 hydrogen sulfide + 2 5'-deoxyadenosine + 2 L-methionine + 2 reduced [2Fe-2S]-[ferredoxin]. The protein operates within protein modification; protein lipoylation via endogenous pathway; protein N(6)-(lipoyl)lysine from octanoyl-[acyl-carrier-protein]: step 2/2. Functionally, catalyzes the radical-mediated insertion of two sulfur atoms into the C-6 and C-8 positions of the octanoyl moiety bound to the lipoyl domains of lipoate-dependent enzymes, thereby converting the octanoylated domains into lipoylated derivatives. The sequence is that of Lipoyl synthase from Pseudoalteromonas translucida (strain TAC 125).